The sequence spans 439 residues: 23S rRNA (uracil(1939)-C(5))-methyltransferase RlmD (439 aa).

One can recognise a TRAM domain in the interval 10 to 68; that stretch reads KSTQPQRIEFTVDSLDHHCVGIGRHQGKAIFIEGALPGEQVKARILDDKKQYAHAALQQ. The [4Fe-4S] cluster site is built by Cys-81, Cys-87, Cys-90, and Cys-169. Residues Gln-273, Phe-302, Asn-307, Glu-323, Asp-350, and Asp-371 each contribute to the S-adenosyl-L-methionine site. Cys-397 (nucleophile) is an active-site residue.

It belongs to the class I-like SAM-binding methyltransferase superfamily. RNA M5U methyltransferase family. RlmD subfamily.

The catalysed reaction is uridine(1939) in 23S rRNA + S-adenosyl-L-methionine = 5-methyluridine(1939) in 23S rRNA + S-adenosyl-L-homocysteine + H(+). Functionally, catalyzes the formation of 5-methyl-uridine at position 1939 (m5U1939) in 23S rRNA. The protein is 23S rRNA (uracil(1939)-C(5))-methyltransferase RlmD of Aeromonas salmonicida (strain A449).